The primary structure comprises 524 residues: Phosphoenolpyruvate carboxykinase (ATP) (524 aa).

Arg52, Tyr188, and Lys194 together coordinate substrate. Residues Lys194, His213, and 229–237 (GLSGTGKTT) contribute to the ATP site. Residues Lys194 and His213 each contribute to the Mn(2+) site. Asp250 provides a ligand contact to Mn(2+). Positions 278, 314, and 439 each coordinate ATP. Arg314 contacts substrate.

The protein belongs to the phosphoenolpyruvate carboxykinase (ATP) family. Requires Mn(2+) as cofactor.

It is found in the cytoplasm. It catalyses the reaction oxaloacetate + ATP = phosphoenolpyruvate + ADP + CO2. It functions in the pathway carbohydrate biosynthesis; gluconeogenesis. Involved in the gluconeogenesis. Catalyzes the conversion of oxaloacetate (OAA) to phosphoenolpyruvate (PEP) through direct phosphoryl transfer between the nucleoside triphosphate and OAA. In Campylobacter jejuni subsp. jejuni serotype O:23/36 (strain 81-176), this protein is Phosphoenolpyruvate carboxykinase (ATP).